Here is a 106-residue protein sequence, read N- to C-terminus: Urease subunit beta (106 aa).

It belongs to the urease beta subunit family. Heterotrimer of UreA (gamma), UreB (beta) and UreC (alpha) subunits. Three heterotrimers associate to form the active enzyme.

Its subcellular location is the cytoplasm. The enzyme catalyses urea + 2 H2O + H(+) = hydrogencarbonate + 2 NH4(+). Its pathway is nitrogen metabolism; urea degradation; CO(2) and NH(3) from urea (urease route): step 1/1. The polypeptide is Urease subunit beta (Synechococcus sp. (strain CC9902)).